The primary structure comprises 537 residues: Apoptosis inhibitor 5-like protein API5 (537 aa).

The ARM-like and Heat-like helical repeats stretch occupies residues 9–363; sequence AEVERLYELG…TTNSLCGYKI (355 aa). A disordered region spans residues 465 to 537; the sequence is WMEQPKKPAP…GGRGRGWGYR (73 aa). A compositionally biased stretch (polar residues) spans 474-492; that stretch reads PTTTGGKRSQPATNGNTPA.

This sequence belongs to the API5 family. In terms of assembly, interacts with AIP1 and AIP2.

The protein localises to the nucleus. Putative anti-apoptotic factor involved in the regulation of tapetal programmed cell death (PCD) and degeneration during anther development. Interacts directly with the DEAD-box ATP-dependent RNA helicases AIP1 and AIP2 that form dimers and bind the promoter region of the cysteine protease CP1 involved in tapetum PCD. This Oryza sativa subsp. japonica (Rice) protein is Apoptosis inhibitor 5-like protein API5.